Here is a 111-residue protein sequence, read N- to C-terminus: Class I hydrophobin 2 (111 aa).

The N-terminal stretch at 1–21 (MFSRVMFCTFLILPLLAAATA) is a signal peptide. Intrachain disulfides connect Cys-30–Cys-90, Cys-37–Cys-84, Cys-38–Cys-71, and Cys-91–Cys-104.

Belongs to the fungal hydrophobin family. Self-assembles to form functional amyloid fibrils called rodlets. Self-assembly into fibrillar rodlets occurs spontaneously at hydrophobic:hydrophilic interfaces and the rodlets further associate laterally to form amphipathic monolayers. Behavior depends on environmental conditions: (1) when the pH increases or in the presence of Ca(2+) ions, an assembled state, beta-sheet rich, is formed; (2) when the solvent polarity increases, the vhm2 shows an increased tendency to reach hydrophobic/hydrophilic interfaces, with no detectable conformational change; and (3) at high temperature, a reversible conformational change and reversible aggregation occur. The physical and chemical properties, both in solution and as a biofilm, are affected by polysaccharides that act as hydrophilic stabilizer.

The protein localises to the secreted. It is found in the cell wall. Its function is as follows. Aerial growth, conidiation, and dispersal of filamentous fungi in the environment rely upon a capability of their secreting small amphipathic proteins called hydrophobins (HPBs) with low sequence identity. Class I can self-assemble into an outermost layer of rodlet bundles on aerial cell surfaces, conferring cellular hydrophobicity that supports fungal growth, development and dispersal; whereas Class II form highly ordered films at water-air interfaces through intermolecular interactions but contribute nothing to the rodlet structure. Vmh2 is a class I hydrophobin involved in biofilm formation and is essential for the maintenance of the surface hydrophobicity of the mycelium. Seems not to be involved in hyphal resistance against environmental stress. This chain is Class I hydrophobin 2, found in Pleurotus ostreatus (strain PC15) (Oyster mushroom).